A 1750-amino-acid chain; its full sequence is Protein TIC 214 (1750 aa).

The next 6 helical transmembrane spans lie at 12–32 (KIINSVIVVGLYYGFMTALSI), 69–89 (FIMGQFIRLISIYYGPLYVAL), 97–117 (ILALPYLLIHLFWNTDKSFFA), 129–149 (LEIYCVFLNHFALQLLNSCIL), 177–197 (FAWFIGQLFILNCFELVLVWI), and 216–236 (IFVIFLNCIFGSLLFLLSIQC). Residues 260 to 277 (RERLQKEEERGVEKKEQS) show a composition bias toward basic and acidic residues. Disordered stretches follow at residues 260–282 (RERLQKEEERGVEKKEQSTEEDP), 617–638 (ATTTNSKTNTTKDTNLETKKES), 718–738 (STDKKRGKTKKEEKRENKQRE), 1205–1225 (RNSRGNYRLSDSKKQNVPKPV), and 1419–1512 (ETDS…NKKE). Low complexity predominate over residues 617–629 (ATTTNSKTNTTKD). Over residues 727 to 738 (KKEEKRENKQRE) the composition is skewed to basic and acidic residues. Residues 1420–1512 (TDSKQKSETD…TKSDKKNKKE (93 aa)) show a composition bias toward basic and acidic residues.

It belongs to the TIC214 family. As to quaternary structure, part of the Tic complex.

It localises to the plastid. Its subcellular location is the chloroplast inner membrane. In terms of biological role, involved in protein precursor import into chloroplasts. May be part of an intermediate translocation complex acting as a protein-conducting channel at the inner envelope. The sequence is that of Protein TIC 214 from Cuscuta reflexa (Southern Asian dodder).